A 158-amino-acid polypeptide reads, in one-letter code: MSKLTHIDDQGRARMVDVSEKPATAREAVAAGFVRMSAETLALAISGSGRKGDVRAVAELAGVMAAKKTSDLIPLCHPLALSKVEVAVEPADGGLSVTARVKTTGPTGVEMEALTAASVACLTIYDMLKAAEKGMVIEAVRLLEKTGGKSGDWKADQP.

Substrate is bound by residues 75-77 (LCH) and 111-112 (ME). D126 is an active-site residue.

This sequence belongs to the MoaC family. As to quaternary structure, homohexamer; trimer of dimers.

The catalysed reaction is (8S)-3',8-cyclo-7,8-dihydroguanosine 5'-triphosphate = cyclic pyranopterin phosphate + diphosphate. The protein operates within cofactor biosynthesis; molybdopterin biosynthesis. Its function is as follows. Catalyzes the conversion of (8S)-3',8-cyclo-7,8-dihydroguanosine 5'-triphosphate to cyclic pyranopterin monophosphate (cPMP). This is Cyclic pyranopterin monophosphate synthase from Caulobacter vibrioides (strain ATCC 19089 / CIP 103742 / CB 15) (Caulobacter crescentus).